A 361-amino-acid chain; its full sequence is Porphobilinogen deaminase (361 aa).

Ser-2 is subject to N-acetylserine. Ser-69 is subject to Phosphoserine. The residue at position 74 (Lys-74) is an N6-acetyllysine. The residue at position 147 (Ser-147) is a Phosphoserine. Cys-261 is modified (S-(dipyrrolylmethanemethyl)cysteine).

This sequence belongs to the HMBS family. As to quaternary structure, monomer. Dipyrromethane serves as cofactor.

It localises to the cytoplasm. The protein localises to the cytosol. The enzyme catalyses 4 porphobilinogen + H2O = hydroxymethylbilane + 4 NH4(+). The protein operates within porphyrin-containing compound metabolism; protoporphyrin-IX biosynthesis; coproporphyrinogen-III from 5-aminolevulinate: step 2/4. In terms of biological role, as part of the heme biosynthetic pathway, catalyzes the sequential polymerization of four molecules of porphobilinogen to form hydroxymethylbilane, also known as preuroporphyrinogen. Catalysis begins with the assembly of the dipyrromethane cofactor by the apoenzyme from two molecules of porphobilinogen or from preuroporphyrinogen. The covalently linked cofactor acts as a primer, around which the tetrapyrrole product is assembled. In the last step of catalysis, the product, preuroporphyrinogen, is released, leaving the cofactor bound to the holodeaminase intact. This chain is Porphobilinogen deaminase (Hmbs), found in Mus musculus (Mouse).